A 101-amino-acid polypeptide reads, in one-letter code: Small ribosomal subunit protein uS14 (101 aa).

It belongs to the universal ribosomal protein uS14 family. In terms of assembly, part of the 30S ribosomal subunit. Contacts proteins S3 and S10.

Binds 16S rRNA, required for the assembly of 30S particles and may also be responsible for determining the conformation of the 16S rRNA at the A site. This chain is Small ribosomal subunit protein uS14, found in Synechococcus sp. (strain JA-3-3Ab) (Cyanobacteria bacterium Yellowstone A-Prime).